The chain runs to 308 residues: Tetraacyldisaccharide 4'-kinase (308 aa).

An ATP-binding site is contributed by 63–70; sequence SFGGNGKT.

This sequence belongs to the LpxK family.

It carries out the reaction a lipid A disaccharide + ATP = a lipid IVA + ADP + H(+). It participates in glycolipid biosynthesis; lipid IV(A) biosynthesis; lipid IV(A) from (3R)-3-hydroxytetradecanoyl-[acyl-carrier-protein] and UDP-N-acetyl-alpha-D-glucosamine: step 6/6. Functionally, transfers the gamma-phosphate of ATP to the 4'-position of a tetraacyldisaccharide 1-phosphate intermediate (termed DS-1-P) to form tetraacyldisaccharide 1,4'-bis-phosphate (lipid IVA). The polypeptide is Tetraacyldisaccharide 4'-kinase (Campylobacter jejuni subsp. jejuni serotype O:23/36 (strain 81-176)).